A 658-amino-acid polypeptide reads, in one-letter code: L-type lectin-domain containing receptor kinase V.4 (658 aa).

An N-terminal signal peptide occupies residues 1–25 (MSRTIGSRVIFLILALFCCTENSRG). Residues 26 to 248 (KLVMQGSAGF…RAMHYMLSWF (223 aa)) are legume-lectin like. Residues 26-280 (KLVMQGSAGF…EKSLVYRIVL (255 aa)) lie on the Extracellular side of the membrane. Residues N66 and N196 are each glycosylated (N-linked (GlcNAc...) asparagine). Residues 281-301 (VTSLALVLFVALVASALSIFF) traverse the membrane as a helical segment. At 302–658 (YRRHKKVKEV…LTEPFTSRGR (357 aa)) the chain is on the cytoplasmic side. The Protein kinase domain maps to 334–592 (KGFKQLLGKG…LGVLCSHQAV (259 aa)). ATP contacts are provided by residues 340–348 (LGKGGFGQV) and K363. Residue D460 is the Proton acceptor of the active site.

The protein in the C-terminal section; belongs to the protein kinase superfamily. Ser/Thr protein kinase family. This sequence in the N-terminal section; belongs to the leguminous lectin family.

The protein localises to the cell membrane. It catalyses the reaction L-seryl-[protein] + ATP = O-phospho-L-seryl-[protein] + ADP + H(+). It carries out the reaction L-threonyl-[protein] + ATP = O-phospho-L-threonyl-[protein] + ADP + H(+). In terms of biological role, involved in resistance response to the pathogenic oomycetes Phytophthora infestans and Phytophthora capsici and to the pathogenic bacteria Pseudomonas syringae. This chain is L-type lectin-domain containing receptor kinase V.4, found in Arabidopsis thaliana (Mouse-ear cress).